Here is a 432-residue protein sequence, read N- to C-terminus: Enolase (432 aa).

Glutamine 167 provides a ligand contact to (2R)-2-phosphoglycerate. Glutamate 209 acts as the Proton donor in catalysis. Residues aspartate 246, glutamate 290, and aspartate 317 each contribute to the Mg(2+) site. The (2R)-2-phosphoglycerate site is built by lysine 342, arginine 371, serine 372, and lysine 393. Lysine 342 functions as the Proton acceptor in the catalytic mechanism.

This sequence belongs to the enolase family. As to quaternary structure, component of the RNA degradosome, a multiprotein complex involved in RNA processing and mRNA degradation. Mg(2+) is required as a cofactor.

Its subcellular location is the cytoplasm. It localises to the secreted. It is found in the cell surface. It catalyses the reaction (2R)-2-phosphoglycerate = phosphoenolpyruvate + H2O. Its pathway is carbohydrate degradation; glycolysis; pyruvate from D-glyceraldehyde 3-phosphate: step 4/5. In terms of biological role, catalyzes the reversible conversion of 2-phosphoglycerate (2-PG) into phosphoenolpyruvate (PEP). It is essential for the degradation of carbohydrates via glycolysis. The polypeptide is Enolase (Cronobacter sakazakii (strain ATCC BAA-894) (Enterobacter sakazakii)).